Here is a 482-residue protein sequence, read N- to C-terminus: Glutamyl-tRNA(Gln) amidotransferase subunit A (482 aa).

Catalysis depends on charge relay system residues Lys-75 and Ser-150. The Acyl-ester intermediate role is filled by Ser-174.

The protein belongs to the amidase family. GatA subfamily. Heterotrimer of A, B and C subunits.

It catalyses the reaction L-glutamyl-tRNA(Gln) + L-glutamine + ATP + H2O = L-glutaminyl-tRNA(Gln) + L-glutamate + ADP + phosphate + H(+). In terms of biological role, allows the formation of correctly charged Gln-tRNA(Gln) through the transamidation of misacylated Glu-tRNA(Gln) in organisms which lack glutaminyl-tRNA synthetase. The reaction takes place in the presence of glutamine and ATP through an activated gamma-phospho-Glu-tRNA(Gln). This chain is Glutamyl-tRNA(Gln) amidotransferase subunit A, found in Deinococcus radiodurans (strain ATCC 13939 / DSM 20539 / JCM 16871 / CCUG 27074 / LMG 4051 / NBRC 15346 / NCIMB 9279 / VKM B-1422 / R1).